A 449-amino-acid chain; its full sequence is MAHIKFDYSKVLDKFVAPHEVDNLQAQVTVADEMIRKGTGPGADFLGWRDLPENYDREEFDRILKAAEKIKEESDVLVVIGIGGSYLGAKAAIDFLSNHFANLQTKEERKAPQIVYAGNSISSTYLADLLEYVEGKDFSVNVISKSGTTTEPAIAFRLFKELLVKKYGQEEANKRIYATTDRQKGAVKVEADANGWETFVVPDDIGGRFSVLTAVGLLPIAVSGADIKALMEGANAARKEYSSSKISENEAYQYAAIRNILYRKGYTTEILANYEPSLQYFAEWWKQLAGESEGKDQRGIYPTSANFSTDLHSLGQFIQEGTRNLFETVVRVDKPRKNVVIPELAEDLDGLGYLQGKDVDFVNKKATDGVLLAHTDGDVPNMFITIPEQDAFTLGYIIYFFELAIALSGYLNAVNPFNQPGVEAYKKNMFALLGKPGFEELGAELNARL.

Glutamate 291 serves as the catalytic Proton donor. Catalysis depends on residues histidine 312 and lysine 426.

This sequence belongs to the GPI family.

The protein resides in the cytoplasm. The enzyme catalyses alpha-D-glucose 6-phosphate = beta-D-fructose 6-phosphate. It functions in the pathway carbohydrate biosynthesis; gluconeogenesis. Its pathway is carbohydrate degradation; glycolysis; D-glyceraldehyde 3-phosphate and glycerone phosphate from D-glucose: step 2/4. Its function is as follows. Catalyzes the reversible isomerization of glucose-6-phosphate to fructose-6-phosphate. This Streptococcus thermophilus (strain CNRZ 1066) protein is Glucose-6-phosphate isomerase.